Consider the following 373-residue polypeptide: 3 beta-hydroxysteroid dehydrogenase/Delta 5--&gt;4-isomerase type 1 (373 aa).

NADP(+)-binding positions include 10–15 (GAGGFL), tyrosine 155, and lysine 159. The Proton donor role is filled by lysine 159. The helical transmembrane segment at 288–308 (LSLMYWIGFLLEIVSFLLRPI) threads the bilayer.

It belongs to the 3-beta-HSD family. As to expression, placenta and skin. Predominantly expressed in mammary gland tissue.

It localises to the endoplasmic reticulum membrane. The protein localises to the mitochondrion membrane. It carries out the reaction a 3beta-hydroxy-Delta(5)-steroid + NAD(+) = a 3-oxo-Delta(5)-steroid + NADH + H(+). It catalyses the reaction pregnenolone + NAD(+) = pregn-5-ene-3,20-dione + NADH + H(+). The catalysed reaction is 3beta-hydroxyandrost-5-en-17-one + NAD(+) = androst-5-ene-3,17-dione + NADH + H(+). The enzyme catalyses androst-5-en-3beta,17beta-diol + NAD(+) = 17beta-hydroxy-androst-5-en-3-one + NADH + H(+). It carries out the reaction a 3beta-hydroxysteroid + NADP(+) = a 3-oxosteroid + NADPH + H(+). It catalyses the reaction 5alpha-androstane-3beta,17beta-diol + NADP(+) = 17beta-hydroxy-5alpha-androstan-3-one + NADPH + H(+). The catalysed reaction is 3beta-hydroxy-5alpha-androstan-17-one + NADP(+) = 5alpha-androstan-3,17-dione + NADPH + H(+). The enzyme catalyses a 3-oxo-Delta(5)-steroid = a 3-oxo-Delta(4)-steroid. It carries out the reaction pregn-5-ene-3,20-dione = progesterone. It catalyses the reaction androst-5-ene-3,17-dione = androst-4-ene-3,17-dione. The catalysed reaction is 17beta-hydroxy-androst-5-en-3-one = testosterone. The enzyme catalyses 5alpha-androstane-3beta,17beta-diol + NAD(+) = 17beta-hydroxy-5alpha-androstan-3-one + NADH + H(+). Its pathway is steroid hormone biosynthesis. It participates in steroid metabolism. In terms of biological role, a bifunctional enzyme responsible for the oxidation and isomerization of 3beta-hydroxy-Delta(5)-steroid precursors to 3-oxo-Delta(4)-steroids, an essential step in steroid hormone biosynthesis. Specifically catalyzes the conversion of pregnenolone to progesterone, 17alpha-hydroxypregnenolone to 17alpha-hydroxyprogesterone, dehydroepiandrosterone (DHEA) to 4-androstenedione, and androstenediol to testosterone. Additionally, catalyzes the interconversion between 3beta-hydroxy and 3-oxo-5alpha-androstane steroids controlling the bioavalability of the active forms. Specifically converts dihydrotestosterone to its inactive form 5alpha-androstanediol, that does not bind androgen receptor/AR. Also converts androstanedione, a precursor of testosterone and estrone, to epiandrosterone. Expected to use NAD(+) as preferred electron donor for the 3beta-hydroxy-steroid dehydrogenase activity and NADPH for the 3-ketosteroid reductase activity. This chain is 3 beta-hydroxysteroid dehydrogenase/Delta 5--&gt;4-isomerase type 1, found in Homo sapiens (Human).